A 1940-amino-acid chain; its full sequence is Protein ORF1940 (1940 aa).

TPR repeat units lie at residues 119–153, 155–186, 480–513, and 617–652; these read IKAC…ALQY, FQSL…LQQI, RLPD…GLHG, and GKSM…SPTS. Disordered regions lie at residues 1160 to 1239 and 1519 to 1571; these read PSKV…PGAV and KGPS…TVTS. Positions 1164-1185 are enriched in low complexity; it reads QNTTQPSATQNTTTQPTAQNTS. Positions 1186–1200 are enriched in polar residues; the sequence is LPGATQNTTLPTPSK. Low complexity-rich tracts occupy residues 1201–1235, 1521–1539, and 1561–1571; these read VQNT…NTSL, PSTT…MTPP, and TPGSGSQTVTS. One copy of the TPR 5 repeat lies at 1691 to 1724; the sequence is KDLNKSVGTSVVEEAKYNSTLQTYLAGLGIKDLN. The tract at residues 1862 to 1940 is disordered; sequence TTTHHITPPP…AEQAEQVLLI (79 aa). Residues 1868–1883 show a composition bias toward pro residues; it reads TPPPPPPPPPPPPPPK. Residues 1884 to 1894 are compositionally biased toward low complexity; that stretch reads TQTITTTTQIT. A compositionally biased stretch (pro residues) spans 1895–1912; sequence PPSPPPTPPPPPPPPKSP.

In Acidianus convivator (ATV), this protein is Protein ORF1940.